Reading from the N-terminus, the 968-residue chain is RNA polymerase-associated protein RapA (968 aa).

Residues Asp-164–Asn-334 form the Helicase ATP-binding domain. Asp-177–Thr-184 provides a ligand contact to ATP. Residues Asp-280–His-283 carry the DEAH box motif. A Helicase C-terminal domain is found at Arg-490–Gly-662.

The protein belongs to the SNF2/RAD54 helicase family. RapA subfamily. Interacts with the RNAP. Has a higher affinity for the core RNAP than for the holoenzyme. Its ATPase activity is stimulated by binding to RNAP.

Its function is as follows. Transcription regulator that activates transcription by stimulating RNA polymerase (RNAP) recycling in case of stress conditions such as supercoiled DNA or high salt concentrations. Probably acts by releasing the RNAP, when it is trapped or immobilized on tightly supercoiled DNA. Does not activate transcription on linear DNA. Probably not involved in DNA repair. This chain is RNA polymerase-associated protein RapA, found in Escherichia coli O139:H28 (strain E24377A / ETEC).